The following is a 444-amino-acid chain: MREIVHIQAGQCGNQIGSKFWEVISDEHGIDPLGQYHGDSDLQLERINVYYNEVQKKRYVPRAILVDLEPGTMDSVRAGAFGQLFRPDNYVFGQSGAGNNWAKGHYTEGAELVDSVLDVIRKEAEACDCLQGFQFTHSLGGGTGSGMGTLLISKIREEYPDRIMTTFSVVPSPKVSDTVVEPYNATLSVHQLVENTDETFCIDNEALYDICFRTLKLTTPTYGDLNHLVSATMSGVTTCLRFPGQLNADLRKLAVNMVPFPRLHFFMPGFAPLTSRSNQQYRAVTVAELTQQLFDAKNMMAACDPRHGRYLTAAAIFRGRMSMKDVDEQMLNIQNKNSAYFVDWIPNNVKTAVCDIPPRDLKMAATFIGNSTAIQELFKRVSEQFTAMFRRKAFLHWYTGEGMDEMEFTEAESNMNDLVSEYQQYQDASADDELNETIEQAETE.

8 residues coordinate GTP: Gln-11, Glu-69, Ser-138, Gly-142, Thr-143, Gly-144, Asn-204, and Asn-226. Glu-69 provides a ligand contact to Mg(2+).

Belongs to the tubulin family. As to quaternary structure, dimer of alpha and beta chains. A typical microtubule is a hollow water-filled tube with an outer diameter of 25 nm and an inner diameter of 15 nM. Alpha-beta heterodimers associate head-to-tail to form protofilaments running lengthwise along the microtubule wall with the beta-tubulin subunit facing the microtubule plus end conferring a structural polarity. Microtubules usually have 13 protofilaments but different protofilament numbers can be found in some organisms and specialized cells. Requires Mg(2+) as cofactor.

Its subcellular location is the cytoplasm. The protein resides in the cytoskeleton. In terms of biological role, tubulin is the major constituent of microtubules, a cylinder consisting of laterally associated linear protofilaments composed of alpha- and beta-tubulin heterodimers. Microtubules grow by the addition of GTP-tubulin dimers to the microtubule end, where a stabilizing cap forms. Below the cap, tubulin dimers are in GDP-bound state, owing to GTPase activity of alpha-tubulin. This is Tubulin beta chain (TBB) from Onchocerca gibsoni.